We begin with the raw amino-acid sequence, 550 residues long: MATPQQPLLTKTHKQNSIISFKILTFVVTLFVALFLVVFLVAPYQFEIKHSNLCKTAQDSQLCLSYVSDLMSNEIVTTDSDGLSILMKFLVNYVHQMNNAIPVVSKMKNQINDIRQEGALTDCLELLDQSVDLVSDSIAAIDKRTHSEHANAQSWLSGVLTNHVTCLDELDSFTKAMINGTNLDELISRAKVALAMLASVTTPNDDVLRPGLGKMPSWVSSRDRKLMESSGKDIGANAVVAKDGTGKYRTLAEAVAAAPDKSKTRYVIYVKRGIYKENVEVSSRKMKLMIVGDGMHATIITGNLNVVDGSTTFHSATLAAVGKGFILQDICIQNTAGPAKHQAVALRVGADKSVINRCRIDAYQDTLYAHSQRQFYRDSYVTGTIDFIFGNAAVVFQKCKLVARKPGKYQQNMVTAQGRTDPNQATGTSIQFCNIIASSDLEPVLKEFPTYLGRPWKKYSRTVVMESYLGGLINPAGWAEWDGDFALKTLYYGEFMNNGPGAGTSKRVKWPGYHCITDPAEAMPFTVAKLIQGGSWLRSTGVAYVDGLYD.

An N-linked (GlcNAc...) asparagine glycan is attached at asparagine 179. Positions 312 and 342 each coordinate substrate. Cysteine 331 and cysteine 358 form a disulfide bridge. Aspartate 365 serves as the catalytic Proton donor. Residue aspartate 386 is the Nucleophile of the active site. A disulfide bridge links cysteine 399 with cysteine 433. Substrate is bound by residues arginine 454 and tryptophan 456.

This sequence in the N-terminal section; belongs to the PMEI family. The protein in the C-terminal section; belongs to the pectinesterase family.

It is found in the secreted. The protein localises to the cell wall. It carries out the reaction [(1-&gt;4)-alpha-D-galacturonosyl methyl ester](n) + n H2O = [(1-&gt;4)-alpha-D-galacturonosyl](n) + n methanol + n H(+). Its pathway is glycan metabolism; pectin degradation; 2-dehydro-3-deoxy-D-gluconate from pectin: step 1/5. In terms of biological role, pectinesterase may play a role in cell wall metabolism during fruit growth and development prior to ripening and may be required for preparing cell walls for softening by polygalacturonase during fruit ripening. This Solanum lycopersicum (Tomato) protein is Pectinesterase 2.2 (PME2.2).